We begin with the raw amino-acid sequence, 115 residues long: Tyrosine-protein phosphatase 18 (115 aa).

In terms of domain architecture, Tyrosine-protein phosphatase spans 1 to 115 (WLMIVEQKCR…ETGSDAPMVV (115 aa)). Asp-83 serves as a coordination point for substrate.

The protein belongs to the protein-tyrosine phosphatase family.

It catalyses the reaction O-phospho-L-tyrosyl-[protein] + H2O = L-tyrosyl-[protein] + phosphate. This chain is Tyrosine-protein phosphatase 18 (STY-18), found in Styela plicata (Wrinkled sea squirt).